Consider the following 258-residue polypeptide: Regulatory protein RecX (258 aa).

The protein belongs to the RecX family.

The protein resides in the cytoplasm. In terms of biological role, modulates RecA activity. The protein is Regulatory protein RecX of Streptococcus pyogenes serotype M2 (strain MGAS10270).